Reading from the N-terminus, the 272-residue chain is MIKTKIMGILNVTPDSFSDGGQYHSVDQAVKRAKEMIDEGVDIIDVGGVSTRPGHKEVSHKEVSLKEEMNRVLPVVESIVKYDVQISVDTFRSEVAEACLKLGVSMINDQWAGLFDSNMFNVVSQYGAEIVLTHNGDGHRDKPVVEEMLVSLLAQANKAELAGIPHNKIWLDPGIGFPKTREEENEVMARLDELVATEYPVLLATSRKRYIKEMMNQDSSPSDRDEATAATTAYGIMKGVRGVRVHNVLLNTRLAQSMDFLKENEYERHHLS.

The 256-residue stretch at 1-256 folds into the Pterin-binding domain; the sequence is MIKTKIMGIL…NVLLNTRLAQ (256 aa). Position 11 (Asn11) interacts with Mg(2+). (7,8-dihydropterin-6-yl)methyl diphosphate is bound by residues Thr51, Asp89, Asn108, Asp172, Lys208, and 244–246; that span reads RVH.

The protein belongs to the DHPS family. Homodimer. Requires Mg(2+) as cofactor.

The catalysed reaction is (7,8-dihydropterin-6-yl)methyl diphosphate + 4-aminobenzoate = 7,8-dihydropteroate + diphosphate. The protein operates within cofactor biosynthesis; tetrahydrofolate biosynthesis; 7,8-dihydrofolate from 2-amino-4-hydroxy-6-hydroxymethyl-7,8-dihydropteridine diphosphate and 4-aminobenzoate: step 1/2. Functionally, catalyzes the condensation of para-aminobenzoate (pABA) with 6-hydroxymethyl-7,8-dihydropterin diphosphate (DHPt-PP) to form 7,8-dihydropteroate (H2Pte), the immediate precursor of folate derivatives. The chain is Dihydropteroate synthase (folP) from Staphylococcus epidermidis (strain ATCC 12228 / FDA PCI 1200).